The chain runs to 642 residues: Threonine--tRNA ligase (642 aa).

One can recognise a TGS domain in the interval 1 to 61 (MPVITLPDGS…ENDAQLSIIT (61 aa)). Positions 243 to 534 (DHRKIGKQLD…LTEEFAGFFP (292 aa)) are catalytic. Lysine 286 bears the N6-acetyllysine mark. Zn(2+) contacts are provided by cysteine 334, histidine 385, and histidine 511.

This sequence belongs to the class-II aminoacyl-tRNA synthetase family. Homodimer. Requires Zn(2+) as cofactor.

Its subcellular location is the cytoplasm. The catalysed reaction is tRNA(Thr) + L-threonine + ATP = L-threonyl-tRNA(Thr) + AMP + diphosphate + H(+). Functionally, catalyzes the attachment of threonine to tRNA(Thr) in a two-step reaction: L-threonine is first activated by ATP to form Thr-AMP and then transferred to the acceptor end of tRNA(Thr). Also edits incorrectly charged L-seryl-tRNA(Thr). This chain is Threonine--tRNA ligase, found in Shigella flexneri serotype 5b (strain 8401).